Consider the following 633-residue polypeptide: DNA mismatch repair protein MutL (633 aa).

The protein belongs to the DNA mismatch repair MutL/HexB family.

This protein is involved in the repair of mismatches in DNA. It is required for dam-dependent methyl-directed DNA mismatch repair. May act as a 'molecular matchmaker', a protein that promotes the formation of a stable complex between two or more DNA-binding proteins in an ATP-dependent manner without itself being part of a final effector complex. The chain is DNA mismatch repair protein MutL from Bacillus pumilus (strain SAFR-032).